A 424-amino-acid chain; its full sequence is Double-stranded RNA-binding protein 8 (424 aa).

The span at 1 to 10 (MDMPPTPLPP) shows a compositional bias: pro residues. A disordered region spans residues 1–22 (MDMPPTPLPPETANTSPAPNGA). DRBM domains are found at residues 33-102 (VFKS…EIVK) and 118-185 (LCKN…AIQG). Composition is skewed to basic and acidic residues over residues 287-308 (KRVEAEPPRDIEMVQPDKENQH) and 318-328 (DEARVEQEPSR). The segment at 287 to 330 (KRVEAEPPRDIEMVQPDKENQHSDAALVQPDDEARVEQEPSRDI) is disordered.

Its function is as follows. Binds double-stranded RNA. The chain is Double-stranded RNA-binding protein 8 (DRB8) from Oryza sativa subsp. japonica (Rice).